The primary structure comprises 415 residues: Histidine--tRNA ligase (415 aa).

Belongs to the class-II aminoacyl-tRNA synthetase family. Homodimer.

Its subcellular location is the cytoplasm. It carries out the reaction tRNA(His) + L-histidine + ATP = L-histidyl-tRNA(His) + AMP + diphosphate + H(+). The chain is Histidine--tRNA ligase from Idiomarina loihiensis (strain ATCC BAA-735 / DSM 15497 / L2-TR).